Consider the following 742-residue polypeptide: Alginate lyase (742 aa).

The signal sequence occupies residues 1–26 (MRLQPLFVSLALAAPCALLPTASLSA). Substrate contacts are provided by residues R143, 153–156 (QVLN), Q204, H208, and 263–266 (YYQR). The active-site Proton donor is the Y264. H418 serves as the catalytic Proton acceptor. Zn(2+)-binding residues include H420 and D438. Residue R443 coordinates substrate. A Zn(2+)-binding site is contributed by H469. Substrate is bound at residue E669.

The protein belongs to the polysaccharide lyase 17 family. As to quaternary structure, homodimer. The cofactor is Zn(2+).

The protein localises to the periplasm. It carries out the reaction Cleavage of 4-deoxy-alpha-L-erythro-hex-4-enopyranuronoside oligosaccharides into 4-deoxy-alpha-L-erythro-hex-4-enopyranuronate monosaccharides.. Functionally, polysaccharide lyase that catalyzes the depolymerization of alginate via a beta-elimination mechanism, cleaving the beta-1,4 glycosidic bond between two adjacent sugar residues. Acts specifically on alginate and each of its block structures, with highest activity toward poly-beta-D-mannuronate (poly-ManA). Shows an exolytic mode of action, producing unsaturated monomers. Displays a very low activity against poly-beta-D-glucuronate (poly-GlcA), and is not active on poly-alpha-D-galacturonate, hyaluronan, heparin, heparan sulfate and chondroitin sulfate. In Stenotrophomonas maltophilia (strain K279a), this protein is Alginate lyase.